The primary structure comprises 675 residues: Probable potassium transport system protein Kup (675 aa).

12 consecutive transmembrane segments (helical) span residues Leu12–Val32, Val55–Leu75, Trp98–Pro118, Trp143–Gly163, Ser170–Ile190, Met216–Ser236, Thr249–Leu269, Ile296–Gly316, Ile345–Phe365, Ala374–Val394, Phe401–Ser421, and Gly428–Phe448.

It belongs to the HAK/KUP transporter (TC 2.A.72) family.

It is found in the cell membrane. The enzyme catalyses K(+)(in) + H(+)(in) = K(+)(out) + H(+)(out). Its function is as follows. Transport of potassium into the cell. Likely operates as a K(+):H(+) symporter. The polypeptide is Probable potassium transport system protein Kup (Levilactobacillus brevis (strain ATCC 367 / BCRC 12310 / CIP 105137 / JCM 1170 / LMG 11437 / NCIMB 947 / NCTC 947) (Lactobacillus brevis)).